The following is a 568-amino-acid chain: MFSYLPRYPLRAASARALVRATRPSYRSALLRYQSSEAVGRTQEIVPGAYQIPPRDFSRQHEEKLAPKNAARAPRRIEPATLKLNSKNLSQLQNVTVPTYQREGVKQGIVHVGVGGFHRAHLAAYVDTLLEQFNSQDWSICGVDLQPFAAPMRDALGSQDNLYTMIECDTEGTSARVIGSITDYLFAPDNCEAVIAKMAHPDTHIVSMTVTESGYYMNENTHELQIDHPDIAADLAGQQPPRTVFAYLYAALARRHAAGLRPFTVMSCDNMQKNGDISRNMLLAFARQQNPEVADWIAENGAFPNSMVDRITPRTSDENKAQLAQEFGVEDSWPVVTEVFHQWVLEDKFADGRPPFEKAGVQVVPNVHKVEEYELIKLRLLNASHSAMGYAGYLGGFTYIHEVIADPTFRKYIRNMMQEEVQPLLPRIPGVSVDDYCNTLLGRFSNPTLKDELPRICLGGSGKIPQFIMPSIAEQIQAGGPLRRLTLCAAAWFRYLRGINEQGQAFKLDDPMAEELQAKALESPFSVLEVKSLFGDDLRDDKRFVAELKNALESLERDGARATIAQYA.

Ile-109–Ala-120 provides a ligand contact to NAD(+).

It belongs to the mannitol dehydrogenase family. Monomer.

The catalysed reaction is D-mannitol + NAD(+) = D-fructose + NADH + H(+). Functionally, catalyzes the NAD(H)-dependent interconversion of D-fructose and D-mannitol in the mannitol metabolic pathway. This Phaeosphaeria nodorum (strain SN15 / ATCC MYA-4574 / FGSC 10173) (Glume blotch fungus) protein is Mannitol 2-dehydrogenase.